We begin with the raw amino-acid sequence, 388 residues long: Dual-specificity RNA methyltransferase RlmN (388 aa).

The active-site Proton acceptor is E109. The Radical SAM core domain occupies 115-354 (EDDRATLCVS…TIVRKTRGDD (240 aa)). The cysteines at positions 122 and 359 are disulfide-linked. The [4Fe-4S] cluster site is built by C129, C133, and C136. S-adenosyl-L-methionine-binding positions include 183 to 184 (GE), S215, 237 to 239 (SLH), and N316. C359 serves as the catalytic S-methylcysteine intermediate.

This sequence belongs to the radical SAM superfamily. RlmN family. [4Fe-4S] cluster is required as a cofactor.

Its subcellular location is the cytoplasm. It catalyses the reaction adenosine(2503) in 23S rRNA + 2 reduced [2Fe-2S]-[ferredoxin] + 2 S-adenosyl-L-methionine = 2-methyladenosine(2503) in 23S rRNA + 5'-deoxyadenosine + L-methionine + 2 oxidized [2Fe-2S]-[ferredoxin] + S-adenosyl-L-homocysteine. The catalysed reaction is adenosine(37) in tRNA + 2 reduced [2Fe-2S]-[ferredoxin] + 2 S-adenosyl-L-methionine = 2-methyladenosine(37) in tRNA + 5'-deoxyadenosine + L-methionine + 2 oxidized [2Fe-2S]-[ferredoxin] + S-adenosyl-L-homocysteine. Specifically methylates position 2 of adenine 2503 in 23S rRNA and position 2 of adenine 37 in tRNAs. m2A2503 modification seems to play a crucial role in the proofreading step occurring at the peptidyl transferase center and thus would serve to optimize ribosomal fidelity. The sequence is that of Dual-specificity RNA methyltransferase RlmN from Citrobacter koseri (strain ATCC BAA-895 / CDC 4225-83 / SGSC4696).